We begin with the raw amino-acid sequence, 91 residues long: Small integral membrane protein 12-A (91 aa).

Residues 12–34 form a helical membrane-spanning segment; the sequence is YAPYITFPVAFVVGAVGYQLEWF.

This sequence belongs to the SMIM12 family.

The protein localises to the membrane. This is Small integral membrane protein 12-A (smim12-a) from Xenopus laevis (African clawed frog).